Reading from the N-terminus, the 148-residue chain is Transcription antitermination protein NusB (148 aa).

Belongs to the NusB family.

Functionally, involved in transcription antitermination. Required for transcription of ribosomal RNA (rRNA) genes. Binds specifically to the boxA antiterminator sequence of the ribosomal RNA (rrn) operons. The polypeptide is Transcription antitermination protein NusB (Saccharopolyspora erythraea (strain ATCC 11635 / DSM 40517 / JCM 4748 / NBRC 13426 / NCIMB 8594 / NRRL 2338)).